The sequence spans 308 residues: uncharacterized protein (308 aa).

This is an uncharacterized protein from Acanthamoeba polyphaga (Amoeba).